The chain runs to 401 residues: Argininosuccinate synthase (401 aa).

ATP is bound by residues 8–16 and Ala35; that span reads AYSGGLDTS. Residues Tyr86 and Ser91 each coordinate L-citrulline. Gly116 provides a ligand contact to ATP. Thr118, Asn122, and Asp123 together coordinate L-aspartate. An L-citrulline-binding site is contributed by Asn122. The L-citrulline site is built by Arg126, Ser175, Ser184, Glu260, and Tyr272.

The protein belongs to the argininosuccinate synthase family. Type 1 subfamily. As to quaternary structure, homotetramer.

It localises to the cytoplasm. The catalysed reaction is L-citrulline + L-aspartate + ATP = 2-(N(omega)-L-arginino)succinate + AMP + diphosphate + H(+). Its pathway is amino-acid biosynthesis; L-arginine biosynthesis; L-arginine from L-ornithine and carbamoyl phosphate: step 2/3. The protein is Argininosuccinate synthase of Carboxydothermus hydrogenoformans (strain ATCC BAA-161 / DSM 6008 / Z-2901).